The primary structure comprises 484 residues: Probable glycine dehydrogenase (decarboxylating) subunit 2 (484 aa).

Lysine 264 is subject to N6-(pyridoxal phosphate)lysine.

The protein belongs to the GcvP family. C-terminal subunit subfamily. The glycine cleavage system is composed of four proteins: P, T, L and H. In this organism, the P 'protein' is a heterodimer of two subunits. Pyridoxal 5'-phosphate is required as a cofactor.

The catalysed reaction is N(6)-[(R)-lipoyl]-L-lysyl-[glycine-cleavage complex H protein] + glycine + H(+) = N(6)-[(R)-S(8)-aminomethyldihydrolipoyl]-L-lysyl-[glycine-cleavage complex H protein] + CO2. In terms of biological role, the glycine cleavage system catalyzes the degradation of glycine. The P protein binds the alpha-amino group of glycine through its pyridoxal phosphate cofactor; CO(2) is released and the remaining methylamine moiety is then transferred to the lipoamide cofactor of the H protein. This is Probable glycine dehydrogenase (decarboxylating) subunit 2 from Legionella pneumophila subsp. pneumophila (strain Philadelphia 1 / ATCC 33152 / DSM 7513).